The sequence spans 170 residues: Disulfide bond formation protein B 1 (170 aa).

The Cytoplasmic portion of the chain corresponds to 1-14 (MNDYTLAIRRERRL). The chain crosses the membrane as a helical span at residues 15 to 31 (LMLLGWVCIALLAGALY). Residues 32 to 49 (LQYVKNEDPCPLCIIQRY) lie on the Periplasmic side of the membrane. An intrachain disulfide couples Cys41 to Cys44. The chain crosses the membrane as a helical span at residues 50-64 (FFCAIGIFAFLAAGI). The Cytoplasmic portion of the chain corresponds to 65 to 71 (RNWRGVW). Residues 72 to 89 (VLELLIAIAAAGGVGTAA) traverse the membrane as a helical segment. The Periplasmic portion of the chain corresponds to 90–144 (RHLTIQMNPGFSCGFDTLQPIVDSLPPAQWFPGMFKVAGLCETVYPPIFGILLPG). A disulfide bridge links Cys102 with Cys130. A helical membrane pass occupies residues 145-163 (WSLIGFAVILIAVVASLWR). Residues 164–170 (HRRKLVG) lie on the Cytoplasmic side of the membrane.

Belongs to the DsbB family.

It localises to the cell inner membrane. Its function is as follows. Required for disulfide bond formation in some periplasmic proteins. Acts by oxidizing the DsbA protein. This is Disulfide bond formation protein B 1 from Burkholderia lata (strain ATCC 17760 / DSM 23089 / LMG 22485 / NCIMB 9086 / R18194 / 383).